Here is a 138-residue protein sequence, read N- to C-terminus: ATP synthase epsilon chain (138 aa).

The protein belongs to the ATPase epsilon chain family. As to quaternary structure, F-type ATPases have 2 components, CF(1) - the catalytic core - and CF(0) - the membrane proton channel. CF(1) has five subunits: alpha(3), beta(3), gamma(1), delta(1), epsilon(1). CF(0) has three main subunits: a, b and c.

Its subcellular location is the cell inner membrane. Produces ATP from ADP in the presence of a proton gradient across the membrane. In Geobacter sp. (strain M21), this protein is ATP synthase epsilon chain.